A 421-amino-acid polypeptide reads, in one-letter code: PDZ and LIM domain protein 7 (421 aa).

In terms of domain architecture, PDZ spans 1 to 85 (MEEYKVTLDG…KLGLVLSRFA (85 aa)). The interval 115-193 (IARPFGSGTP…STGPAVRPPW (79 aa)) is disordered. A compositionally biased stretch (polar residues) spans 147-172 (YPSSQMPQGQLQNGQKSRTVSNVSGK). LIM zinc-binding domains follow at residues 244-302 (PVCS…ARFA), 303-362 (PNCA…MFGT), and 363-421 (KCRG…FSNV).

It localises to the cytoplasm. It is found in the cytoskeleton. Its function is as follows. May function as a scaffold on which the coordinated assembly of proteins can occur. May play a role as an adapter that, via its PDZ domain, localizes LIM-binding proteins to actin filaments of both skeletal muscle and nonmuscle tissues. This chain is PDZ and LIM domain protein 7 (pdlim7), found in Xenopus laevis (African clawed frog).